Consider the following 68-residue polypeptide: ATP synthase F(0) complex subunit 8 (68 aa).

Residues 8–24 form a helical membrane-spanning segment; it reads VWPTIITSMLLTLFLLM. Lysine 54 is modified (N6-acetyllysine; alternate). Lysine 54 carries the post-translational modification N6-succinyllysine; alternate. The residue at position 57 (lysine 57) is an N6-acetyllysine.

This sequence belongs to the ATPase protein 8 family. As to quaternary structure, component of the ATP synthase complex composed at least of ATP5F1A/subunit alpha, ATP5F1B/subunit beta, ATP5MC1/subunit c (homooctomer), MT-ATP6/subunit a, MT-ATP8/subunit 8, ATP5ME/subunit e, ATP5MF/subunit f, ATP5MG/subunit g, ATP5MK/subunit k, ATP5MJ/subunit j, ATP5F1C/subunit gamma, ATP5F1D/subunit delta, ATP5F1E/subunit epsilon, ATP5PF/subunit F6, ATP5PB/subunit b, ATP5PD/subunit d, ATP5PO/subunit OSCP. ATP synthase complex consists of a soluble F(1) head domain (subunits alpha(3) and beta(3)) - the catalytic core - and a membrane F(0) domain - the membrane proton channel (subunits c, a, 8, e, f, g, k and j). These two domains are linked by a central stalk (subunits gamma, delta, and epsilon) rotating inside the F1 region and a stationary peripheral stalk (subunits F6, b, d, and OSCP). Interacts with PRICKLE3.

It is found in the mitochondrion membrane. Functionally, subunit 8, of the mitochondrial membrane ATP synthase complex (F(1)F(0) ATP synthase or Complex V) that produces ATP from ADP in the presence of a proton gradient across the membrane which is generated by electron transport complexes of the respiratory chain. ATP synthase complex consist of a soluble F(1) head domain - the catalytic core - and a membrane F(1) domain - the membrane proton channel. These two domains are linked by a central stalk rotating inside the F(1) region and a stationary peripheral stalk. During catalysis, ATP synthesis in the catalytic domain of F(1) is coupled via a rotary mechanism of the central stalk subunits to proton translocation. In vivo, can only synthesize ATP although its ATP hydrolase activity can be activated artificially in vitro. Part of the complex F(0) domain. The sequence is that of ATP synthase F(0) complex subunit 8 from Symphalangus syndactylus (Siamang).